A 506-amino-acid chain; its full sequence is UPF0371 protein FN1121 (506 aa).

This sequence belongs to the UPF0371 family.

This Fusobacterium nucleatum subsp. nucleatum (strain ATCC 25586 / DSM 15643 / BCRC 10681 / CIP 101130 / JCM 8532 / KCTC 2640 / LMG 13131 / VPI 4355) protein is UPF0371 protein FN1121.